The chain runs to 239 residues: Peptidase E (239 aa).

Residues S122, D137, and H159 each act as charge relay system in the active site.

The protein belongs to the peptidase S51 family.

Its subcellular location is the cytoplasm. The catalysed reaction is Dipeptidase E catalyzes the hydrolysis of dipeptides Asp-|-Xaa. It does not act on peptides with N-terminal Glu, Asn or Gln, nor does it cleave isoaspartyl peptides.. In terms of biological role, hydrolyzes dipeptides containing N-terminal aspartate residues. May play a role in allowing the cell to use peptide aspartate to spare carbon otherwise required for the synthesis of the aspartate family of amino acids. In Shewanella baltica (strain OS195), this protein is Peptidase E.